The sequence spans 272 residues: 2-amino-3,7-dideoxy-D-threo-hept-6-ulosonate synthase (272 aa).

The active-site Proton acceptor is Asp33. Residues Asp33–Ser37 and Tyr153–Arg155 contribute to the 1-deoxy-D-threo-hexo-2,5-diulose 6-phosphate site. The active-site Proton donor is the Tyr153. Residue Lys184 is the Schiff-base intermediate with substrate of the active site. 1-deoxy-D-threo-hexo-2,5-diulose 6-phosphate-binding positions include Gly209–Gly210 and Gly237–Arg238.

This sequence belongs to the DeoC/FbaB aldolase family. ADHS subfamily. In terms of assembly, homodecamer.

The catalysed reaction is 1-deoxy-D-threo-hexo-2,5-diulose 6-phosphate + L-aspartate 4-semialdehyde = 2,3-dioxopropyl phosphate + 2-amino-2,3,7-trideoxy-D-lyxo-hept-6-ulosonate. Functionally, catalyzes a transaldol reaction between 6-deoxy-5-ketofructose 1-phosphate (DKFP) and L-aspartate semialdehyde (ASA) with an elimination of hydroxypyruvaldehyde phosphate to yield 2-amino-3,7-dideoxy-D-threo-hept-6-ulosonate (ADH). Plays a key role in an alternative pathway of the biosynthesis of 3-dehydroquinate (DHQ), which is involved in the canonical pathway for the biosynthesis of aromatic amino acids. The protein is 2-amino-3,7-dideoxy-D-threo-hept-6-ulosonate synthase of Methanococcus maripaludis (strain C5 / ATCC BAA-1333).